The sequence spans 664 residues: DGRPRTSPRGGSASGKRFQKEPQHNAASHSTYNQEEGYVRIYLRGRPVTNYLPSDVEDYDINAKHPAPTEKLKLDWVYGYRGRDCRCNLYLLPTGEIVYFMAAVVILYNVEEQNQRHYMGHNDDVKSIAVHPDSVTIATGQVAGHDAAEGKPHVRIWSSITLETLHVIGLGFFDRAVCSLSFSKVNVGVNLAAVDESNEHVLSLWDWKKEKKICDTKSSQDPVLACEFHPMNDEQIITLGKGHIHFWNTAGGKLVKKSGIFEKYDKPKFMLSLAFTGNGDVITGDSNGNMYIWGKGNTRISQAVLGAHEGGIFSLCVMNDGQILSGGGKDKKVVLWTADYQQSETTQVPEATGPVRTLCKGKGENFYVGTTRNAILSGDMGGDFTTLVQAHTEELWGLALHPTQGMFLTCGYDKNVILWDFEQHTQRWNKFMEDGCQSAGFHPSGEVVAIGMTSGRWVALDVESGDLYTVHTDGKEQHDIIRYSPNGEYLAVASHDNYIYIYSVKETGRKYSKVGRCSGHSSFVTHIDWSADSTKLQSNSGDYELLFWDAETCKQIVGSKETRDIEWATFTGVLGYPVCGIWPEGSDGTDVNTTARSGNGNILATGDDFGKISLFRYPVNHPKADCNSFKGHSSHVTSVAFNEDSTKLISTGGRDMSCMQWSVV.

The interval 1 to 31 (DGRPRTSPRGGSASGKRFQKEPQHNAASHST) is disordered. 9 WD repeats span residues 120–167 (GHND…TLHV), 172–215 (FFDR…KICD), 218–257 (SSQDPVLACEFHPMNDEQIITLGKGHIHFWNTAGGKLVKK), 265–303 (DKPKFMLSLAFTGNGDVITGDSNGNMYIWGKGNTRISQA), 307–346 (AHEGGIFSLCVMNDGQILSGGGKDKKVVLWTADYQQSETT), 390–429 (AHTEELWGLALHPTQGMFLTCGYDKNVILWDFEQHTQRWN), 473–512 (DGKEQHDIIRYSPNGEYLAVASHDNYIYIYSVKETGRKYS), 519–558 (GHSSFVTHIDWSADSTKLQSNSGDYELLFWDAETCKQIVG), and 631–663 (GHSSHVTSVAFNEDSTKLISTGGRDMSCMQWSV).

Belongs to the WD repeat EMAP family.

The protein resides in the cytoplasm. Its subcellular location is the cytoskeleton. May modify the assembly dynamics of microtubules, such that microtubules are slightly longer, but more dynamic. This Lytechinus variegatus (Green sea urchin) protein is 77 kDa echinoderm microtubule-associated protein (EMAP).